A 449-amino-acid polypeptide reads, in one-letter code: Acetolactate synthase small subunit 1, chloroplastic (449 aa).

The N-terminal 30 residues, 1-30 (MEHIQTRTTLSQLSTLPSDKRLGAIRFKCL), are a transit peptide targeting the chloroplast. ACT domains follow at residues 31 to 98 (LVMK…DLSK) and 259 to 333 (TLSM…DITH).

It belongs to the acetolactate synthase small subunit family. In terms of assembly, the acetolactate synthase complex contains both large catalytic subunits and small regulatory subunits.

The protein resides in the plastid. Its subcellular location is the chloroplast. The protein operates within amino-acid biosynthesis; L-isoleucine biosynthesis; L-isoleucine from 2-oxobutanoate: step 1/4. It functions in the pathway amino-acid biosynthesis; L-valine biosynthesis; L-valine from pyruvate: step 1/4. Its function is as follows. Regulatory subunit of acetohydroxy-acid synthase. Probably involved in feedback inhibition by branched-chain amino acids. Not involved in herbicide tolerance. In Nicotiana plumbaginifolia (Leadwort-leaved tobacco), this protein is Acetolactate synthase small subunit 1, chloroplastic.